The primary structure comprises 535 residues: Probable anion transporter 2, chloroplastic (535 aa).

A chloroplast-targeting transit peptide spans 1–95 (MASIRSCVSV…RERAVAAMCS (95 aa)). The next 12 membrane-spanning stretches (helical) occupy residues 125 to 145 (VVALVAAVMLLCNADRVVMSV), 160 to 180 (FLGIVQSSFLWGYVFSSMVGG), 191 to 211 (VMAGAAALWSLATFLTPWAAS), 215 to 235 (IMLLAIRALFGLAEGVAFPTM), 254 to 274 (ISMGGFHLGNVISFLATPIIM), 279 to 299 (LAGTFAFFASLGYLWLSVWLF), 343 to 363 (IEMWAIIVANVVNNWGYFVLL), 381 to 401 (AAWFSAIPWAVMALSGYVAGA), 413 to 433 (VALVRKIMQSIGFIGPGVSLL), 443 to 463 (VAAVLMTIALSLSSFSQAGYF), 483 to 503 (GIGTVAAIVSTIGTGYFVQWL), and 504 to 524 (GSFQAFLTLTAVLYFSATVFY).

It belongs to the major facilitator superfamily. Sodium/anion cotransporter (TC 2.A.1.14) family.

The protein resides in the plastid. It is found in the chloroplast membrane. Its function is as follows. Probable anion transporter. The protein is Probable anion transporter 2, chloroplastic (PHT4;2) of Oryza sativa subsp. japonica (Rice).